A 1104-amino-acid polypeptide reads, in one-letter code: Protein transport protein SEC31 homolog B (1104 aa).

WD repeat units follow at residues 5 to 45 (KGVG…EIFK), 62 to 109 (PSSE…GSQP), 120 to 160 (VHKG…EPSH), 170 to 210 (ATQG…PIIN), 214 to 257 (SVRR…SPVR), 261 to 301 (GHQR…IVAE), and 304 to 344 (AGNN…RYGV). A Phosphothreonine modification is found at Thr526. The segment at 527 to 562 (PVSTSAKDFMPSDTDFSTKGEETQEMQEEEEESSDP) is disordered. The segment covering 549–560 (TQEMQEEEEESS) has biased composition (acidic residues). The stretch at 662 to 707 (TLCDALASKLMAAGNTLAAVLCYICAGNVDRTVEIWSRSLANERDG) is one WD 8 repeat. Disordered regions lie at residues 782–811 (LSAE…PTQA), 851–874 (HQAQ…PSMR), 892–931 (QQPT…QYPN), and 952–994 (TPGV…SNVP). Polar residues-rich tracts occupy residues 786–811 (PETN…PTQA), 863–874 (PAPTSNAQPSMR), and 892–908 (QQPT…SNNA). The segment covering 959–977 (SVQPASPPTQQAAAQAAPA) has biased composition (low complexity).

This sequence belongs to the WD repeat SEC31 family. In terms of assembly, interacts with SEC13A and SEC13B.

The protein localises to the golgi apparatus. It is found in the endoplasmic reticulum. Its function is as follows. Required for protein transport from the endoplasmic reticulum to the Golgi apparatus. The sequence is that of Protein transport protein SEC31 homolog B from Arabidopsis thaliana (Mouse-ear cress).